We begin with the raw amino-acid sequence, 342 residues long: Glucokinase (342 aa).

18–23 serves as a coordination point for ATP; that stretch reads GDIGGT.

It belongs to the bacterial glucokinase family.

Its subcellular location is the cytoplasm. The catalysed reaction is D-glucose + ATP = D-glucose 6-phosphate + ADP + H(+). In Chelativorans sp. (strain BNC1), this protein is Glucokinase.